The sequence spans 253 residues: Low affinity immunoglobulin gamma Fc region receptor III-B (253 aa).

The first 20 residues, 1–20 (MGQPLPPVALLLLVSASSRA), serve as a signal peptide directing secretion. At 21–207 (ADVPKALVLL…VSSSVLPWHQ (187 aa)) the chain is on the extracellular side. Ig-like C2-type domains lie at 24 to 105 (PKAL…LRVH) and 120 to 189 (EGEP…VTIT). Intrachain disulfides connect cysteine 47–cysteine 89 and cysteine 128–cysteine 172. Residues asparagine 56, asparagine 63, asparagine 165, and asparagine 180 are each glycosylated (N-linked (GlcNAc...) asparagine). A helical membrane pass occupies residues 208–226 (IAFCLVMGLLLAADTGLYF). Residues 227–253 (SVQRDLRSSQRARKEHTLGWSLGSQDK) are Cytoplasmic-facing.

Forms a heterooligomeric complex with ITAM-containing signaling subunits FCER1G. Interacts (via transmembrane domain) with signaling subunits; this interaction is a prerequisite for receptor complex expression on the cell surface and intracellular signal transduction. Binds the Fc region of antigen-complexed IgG.

Its subcellular location is the cell membrane. Functionally, receptor for the invariable Fc fragment of immunoglobulin gamma (IgG). Optimally activated upon binding of clustered antigen-IgG complexes displayed on cell surfaces, triggers lysis of antibody-coated cells, a process known as antibody-dependent cellular cytotoxicity (ADCC). Does not bind free monomeric IgG, thus avoiding inappropriate effector cell activation in the absence of antigenic trigger. Mediates IgG effector functions on natural killer (NK) cells. Binds antigen-IgG complexes generated upon infection and triggers NK cell-dependent cytokine production and degranulation to limit viral load and propagation. Fc-binding subunit that associates with FCER1G adapters to form functional signaling complexes. Following the engagement of antigen-IgG complexes, triggers phosphorylation of immunoreceptor tyrosine-based activation motif (ITAM)-containing adapters with subsequent activation of phosphatidylinositol 3-kinase signaling and sustained elevation of intracellular calcium that ultimately drive NK cell activation. Mediates enhanced ADCC in response to afucosylated IgGs. The polypeptide is Low affinity immunoglobulin gamma Fc region receptor III-B (FCGR3B) (Oryctolagus cuniculus (Rabbit)).